A 607-amino-acid polypeptide reads, in one-letter code: Arginine--tRNA ligase (607 aa).

Residues 147–157 (PNIAKEMHVGH) carry the 'HIGH' region motif.

The protein belongs to the class-I aminoacyl-tRNA synthetase family. Monomer.

The protein resides in the cytoplasm. It catalyses the reaction tRNA(Arg) + L-arginine + ATP = L-arginyl-tRNA(Arg) + AMP + diphosphate. This is Arginine--tRNA ligase from Prochlorococcus marinus (strain NATL1A).